The sequence spans 368 residues: Transcription factor TGA7 (368 aa).

The segment covering 70–82 (HNQIEAEQPSSND) has biased composition (polar residues). The disordered stretch occupies residues 70 to 89 (HNQIEAEQPSSNDNQDDDGR). The bZIP domain maps to 91–151 (HDKMKRRLAQ…LGPSGSINTG (61 aa)). 2 coiled-coil regions span residues 92-142 (DKMK…QGHL) and 252-285 (DQQILEVRNLQQSSQQAEDALSQGIDKLQQSLAE). Residues 93–113 (KMKRRLAQNREAARKSRLRKK) are basic motif. The segment at 119 to 133 (LEESRLKLSQLEQEL) is leucine-zipper. One can recognise a DOG1 domain in the interval 152–363 (IASFEMEYSH…RALSSLWAAR (212 aa)).

The protein belongs to the bZIP family. In terms of assembly, binds DNA as a dimer. Interacts with NPR1 and NPR4. Interacts with GRXC7/ROXY1.

Its subcellular location is the nucleus. In terms of biological role, transcriptional activator that binds specifically to the DNA sequence 5'-TGACG-3'. Recognizes ocs elements like the as-1 motif of the cauliflower mosaic virus 35S promoter. Binding to the as-1-like cis elements mediate auxin- and salicylic acid-inducible transcription. May be involved in the induction of the systemic acquired resistance (SAR) via its interaction with NPR1. The sequence is that of Transcription factor TGA7 (TGA7) from Arabidopsis thaliana (Mouse-ear cress).